Reading from the N-terminus, the 502-residue chain is Regulator of hypoxia-inducible factor 1 (502 aa).

11 helical membrane passes run 54 to 74, 92 to 112, 138 to 158, 188 to 208, 241 to 261, 272 to 292, 335 to 355, 367 to 387, 396 to 416, 437 to 457, and 465 to 485; these read LLAW…VFSC, LDVL…NHTG, IFGA…VLSG, LAPS…NALL, MGYL…PIFL, MALT…YCTA, GPFL…YIMV, LIVA…PNAG, TAVF…ALYF, AYLL…LQAA, and LVLP…YLFI.

As to expression, expressed in intestine, some sensory neurons in the head, body wall muscles and socket cells.

The protein resides in the endoplasmic reticulum membrane. Functionally, involved in the response to variation in environmental oxygen levels by inhibiting hif-1-mediated gene transcription in a vhl-1-independent manner. Plays a role in susceptibility to killing mediated by P.aeruginosa and by pore-forming toxins produced by B.thuringiensis. Probably by preventing hif-1 transcriptional activity, regulates behavioral responses, such as locomotion speed following acute reoxygenation. Plays a role in normal egg-laying probably by regulating spermatogenesis and in body morphogenesis. The polypeptide is Regulator of hypoxia-inducible factor 1 (Caenorhabditis elegans).